A 1475-amino-acid chain; its full sequence is Protein Shroom4 (1475 aa).

The region spanning 10 to 92 (YVPVQLQGGA…ILKLIVRRRN (83 aa)) is the PDZ domain. Disordered regions lie at residues 151–175 (EKSS…GHLL) and 202–321 (CALS…PPRS). Residues 249 to 258 (TSTSHASSYS) show a composition bias toward polar residues. Over residues 294-312 (EQHRASEPVDSLPQKEKPG) the composition is skewed to basic and acidic residues. Ser-412 carries the phosphoserine modification. Disordered stretches follow at residues 432-523 (SKGM…PSAT), 542-577 (HTEA…NRRR), 610-644 (NEAV…SPGD), and 658-688 (SECL…GQSS). Residues 471 to 485 (QTRKERKTTPLDDKL) show a composition bias toward basic and acidic residues. Polar residues predominate over residues 513–523 (SDLTSQQPSAT). Residues 542-557 (HTEASEEGDNEPKECG) are compositionally biased toward basic and acidic residues. The span at 558–568 (RLGGRRSGGPR) shows a compositional bias: gly residues. 2 stretches are compositionally biased toward low complexity: residues 624–635 (PLSASNASLLPS) and 658–667 (SECLSQASES). The residue at position 722 (Ser-722) is a Phosphoserine. 2 stretches are compositionally biased toward polar residues: residues 727–738 (AQPQVALSTEAP) and 775–791 (KSLS…HNNK). 2 disordered regions span residues 727–753 (AQPQ…STPQ) and 772–791 (ESSK…HNNK). Phosphoserine is present on Ser-1010. Disordered regions lie at residues 1022–1041 (SNKP…ASMP) and 1055–1185 (SLEP…QSLQ). The span at 1090–1099 (FPPPRPPPPN) shows a compositional bias: pro residues. Over residues 1110 to 1125 (QLQQQQQQQQQQQQQQ) the composition is skewed to low complexity. A compositionally biased stretch (acidic residues) spans 1128-1145 (EEEEEKEQEEEGEKEEDL). Polar residues predominate over residues 1149–1168 (YFSSELTGSCAPNTEEQPQS). Positions 1190 to 1469 (FALHPSNFVP…QLKCLKESLH (280 aa)) constitute an ASD2 domain. The stretch at 1380-1470 (SESNQEKLVL…LKCLKESLHL (91 aa)) forms a coiled coil.

Belongs to the shroom family. Interacts directly with F-actin. In terms of tissue distribution, detected in most adult tissues examined. Expressed in brain, lung, heart, liver, kidney, muscle and ovary. Expressed throughout the brain, with high expression in the brain stem and cerebellum and weaker expression in the hypothalamus, the hippocampus and the olfactory bulb. Expressed in wide range of cell types during development, including vascular endothelium and the polarized epithelium of the neural tube and kidney.

Its subcellular location is the cytoplasm. It localises to the cytoskeleton. Functionally, probable regulator of cytoskeletal architecture that plays an important role in development. May regulate cellular and cytoskeletal architecture by modulating the spatial distribution of myosin II. This is Protein Shroom4 (Shroom4) from Mus musculus (Mouse).